The following is a 262-amino-acid chain: Global transcriptional regulator CodY (262 aa).

The GAF domain stretch occupies residues 1–159 (MAHLLEKTRK…SSTVVGIQLL (159 aa)). Residues 207–226 (ASVIADRIGITRSVIVNALR) constitute a DNA-binding region (H-T-H motif).

Belongs to the CodY family.

The protein localises to the cytoplasm. DNA-binding global transcriptional regulator which is involved in the adaptive response to starvation and acts by directly or indirectly controlling the expression of numerous genes in response to nutrient availability. During rapid exponential growth, CodY is highly active and represses genes whose products allow adaptation to nutrient depletion. In Streptococcus gordonii (strain Challis / ATCC 35105 / BCRC 15272 / CH1 / DL1 / V288), this protein is Global transcriptional regulator CodY.